The sequence spans 349 residues: Histidinol-phosphate aminotransferase 1 (349 aa).

K213 is subject to N6-(pyridoxal phosphate)lysine.

It belongs to the class-II pyridoxal-phosphate-dependent aminotransferase family. Histidinol-phosphate aminotransferase subfamily. Homodimer. Pyridoxal 5'-phosphate is required as a cofactor.

The catalysed reaction is L-histidinol phosphate + 2-oxoglutarate = 3-(imidazol-4-yl)-2-oxopropyl phosphate + L-glutamate. It participates in amino-acid biosynthesis; L-histidine biosynthesis; L-histidine from 5-phospho-alpha-D-ribose 1-diphosphate: step 7/9. The chain is Histidinol-phosphate aminotransferase 1 from Carboxydothermus hydrogenoformans (strain ATCC BAA-161 / DSM 6008 / Z-2901).